A 689-amino-acid polypeptide reads, in one-letter code: Glycine--tRNA ligase beta subunit (689 aa).

It belongs to the class-II aminoacyl-tRNA synthetase family. As to quaternary structure, tetramer of two alpha and two beta subunits.

It localises to the cytoplasm. The enzyme catalyses tRNA(Gly) + glycine + ATP = glycyl-tRNA(Gly) + AMP + diphosphate. This Shewanella baltica (strain OS223) protein is Glycine--tRNA ligase beta subunit.